The sequence spans 268 residues: Elongation factor Ts (268 aa).

The interval T81 to V84 is involved in Mg(2+) ion dislocation from EF-Tu.

The protein belongs to the EF-Ts family.

Its subcellular location is the cytoplasm. Associates with the EF-Tu.GDP complex and induces the exchange of GDP to GTP. It remains bound to the aminoacyl-tRNA.EF-Tu.GTP complex up to the GTP hydrolysis stage on the ribosome. The polypeptide is Elongation factor Ts (Buchnera aphidicola subsp. Acyrthosiphon pisum (strain 5A)).